The sequence spans 360 residues: NAD(P)H-quinone oxidoreductase subunit 1, chloroplastic (360 aa).

The next 8 membrane-spanning stretches (helical) occupy residues 30-50 (FLPI…LVWL), 98-118 (FSIG…VIPF), 127-147 (FNIG…GLLM), 165-185 (AAQS…ISLL), 203-223 (FWGW…ISSL), 253-273 (FGLF…FVTV), 297-317 (IFGT…FLFI), and 340-360 (FLLP…VFSL).

Belongs to the complex I subunit 1 family. As to quaternary structure, NDH is composed of at least 16 different subunits, 5 of which are encoded in the nucleus.

The protein resides in the plastid. The protein localises to the chloroplast thylakoid membrane. It carries out the reaction a plastoquinone + NADH + (n+1) H(+)(in) = a plastoquinol + NAD(+) + n H(+)(out). It catalyses the reaction a plastoquinone + NADPH + (n+1) H(+)(in) = a plastoquinol + NADP(+) + n H(+)(out). Its function is as follows. NDH shuttles electrons from NAD(P)H:plastoquinone, via FMN and iron-sulfur (Fe-S) centers, to quinones in the photosynthetic chain and possibly in a chloroplast respiratory chain. The immediate electron acceptor for the enzyme in this species is believed to be plastoquinone. Couples the redox reaction to proton translocation, and thus conserves the redox energy in a proton gradient. The sequence is that of NAD(P)H-quinone oxidoreductase subunit 1, chloroplastic from Aethionema cordifolium (Lebanon stonecress).